Here is a 282-residue protein sequence, read N- to C-terminus: 2,3,4,5-tetrahydropyridine-2,6-dicarboxylate N-succinyltransferase (282 aa).

Residues Arg-109 and Asp-146 each coordinate substrate.

It belongs to the transferase hexapeptide repeat family. In terms of assembly, homotrimer.

The protein resides in the cytoplasm. It carries out the reaction (S)-2,3,4,5-tetrahydrodipicolinate + succinyl-CoA + H2O = (S)-2-succinylamino-6-oxoheptanedioate + CoA. The protein operates within amino-acid biosynthesis; L-lysine biosynthesis via DAP pathway; LL-2,6-diaminopimelate from (S)-tetrahydrodipicolinate (succinylase route): step 1/3. This Bartonella henselae (strain ATCC 49882 / DSM 28221 / CCUG 30454 / Houston 1) (Rochalimaea henselae) protein is 2,3,4,5-tetrahydropyridine-2,6-dicarboxylate N-succinyltransferase.